A 161-amino-acid polypeptide reads, in one-letter code: Protein translocase subunit SecE (161 aa).

Acidic residues predominate over residues 1–12; that stretch reads MSDEGDVADEAV. The disordered stretch occupies residues 1 to 80; the sequence is MSDEGDVADE…GVAKDDSTTK (80 aa). The helical transmembrane segment at 133–153 threads the bilayer; that stretch reads VVLAFLAFMVALVAGADLGLT.

It belongs to the SecE/SEC61-gamma family. As to quaternary structure, component of the Sec protein translocase complex. Heterotrimer consisting of SecY, SecE and SecG subunits. The heterotrimers can form oligomers, although 1 heterotrimer is thought to be able to translocate proteins. Interacts with the ribosome. Interacts with SecDF, and other proteins may be involved. Interacts with SecA.

The protein localises to the cell membrane. In terms of biological role, essential subunit of the Sec protein translocation channel SecYEG. Clamps together the 2 halves of SecY. May contact the channel plug during translocation. This chain is Protein translocase subunit SecE, found in Mycobacterium bovis (strain ATCC BAA-935 / AF2122/97).